The primary structure comprises 172 residues: Adenine phosphoribosyltransferase (172 aa).

The protein belongs to the purine/pyrimidine phosphoribosyltransferase family. As to quaternary structure, homodimer.

The protein localises to the cytoplasm. It catalyses the reaction AMP + diphosphate = 5-phospho-alpha-D-ribose 1-diphosphate + adenine. Its pathway is purine metabolism; AMP biosynthesis via salvage pathway; AMP from adenine: step 1/1. Catalyzes a salvage reaction resulting in the formation of AMP, that is energically less costly than de novo synthesis. The protein is Adenine phosphoribosyltransferase of Crocosphaera subtropica (strain ATCC 51142 / BH68) (Cyanothece sp. (strain ATCC 51142)).